The following is a 136-amino-acid chain: Protein NrdI (136 aa).

Belongs to the NrdI family.

Its function is as follows. Probably involved in ribonucleotide reductase function. The polypeptide is Protein NrdI (Erwinia tasmaniensis (strain DSM 17950 / CFBP 7177 / CIP 109463 / NCPPB 4357 / Et1/99)).